Reading from the N-terminus, the 254-residue chain is L-arabinose 1-dehydrogenase (NAD(P)(+)) (254 aa).

The active-site Proton acceptor is the Tyr-142. Positions 142 and 146 each coordinate NAD(+).

Belongs to the NAD(P)-dependent epimerase/dehydratase family. Homotetramer.

It catalyses the reaction alpha-L-arabinopyanose + NAD(+) = L-arabinono-1,4-lactone + NADH + H(+). The catalysed reaction is alpha-L-arabinopyanose + NADP(+) = L-arabinono-1,4-lactone + NADPH + H(+). It participates in carbohydrate degradation; L-arabinose degradation via L-arabinono-1,4-lactone pathway. Functionally, L-AraDH initiates the degradation of L-arabinose. Catalyzes the NAD(P)(+)-dependent conversion of L-arabinose to L-arabino-gamma-lactone. It is highly specific for L-arabinose as substrate and can use both NADP(+) and NAD(+) as electron acceptor, with a slight preference for NADP(+). The polypeptide is L-arabinose 1-dehydrogenase (NAD(P)(+)) (Haloferax volcanii (strain ATCC 29605 / DSM 3757 / JCM 8879 / NBRC 14742 / NCIMB 2012 / VKM B-1768 / DS2) (Halobacterium volcanii)).